A 267-amino-acid polypeptide reads, in one-letter code: Diaminopimelate epimerase (267 aa).

Residues asparagine 15 and asparagine 66 each coordinate substrate. Cysteine 75 functions as the Proton donor in the catalytic mechanism. Substrate-binding positions include 76 to 77 (GN), asparagine 150, asparagine 183, and 201 to 202 (ER). The Proton acceptor role is filled by cysteine 210. 211–212 (GT) contacts substrate.

Belongs to the diaminopimelate epimerase family. Homodimer.

Its subcellular location is the cytoplasm. The enzyme catalyses (2S,6S)-2,6-diaminopimelate = meso-2,6-diaminopimelate. Its pathway is amino-acid biosynthesis; L-lysine biosynthesis via DAP pathway; DL-2,6-diaminopimelate from LL-2,6-diaminopimelate: step 1/1. Catalyzes the stereoinversion of LL-2,6-diaminopimelate (L,L-DAP) to meso-diaminopimelate (meso-DAP), a precursor of L-lysine and an essential component of the bacterial peptidoglycan. The chain is Diaminopimelate epimerase from Bacteroides thetaiotaomicron (strain ATCC 29148 / DSM 2079 / JCM 5827 / CCUG 10774 / NCTC 10582 / VPI-5482 / E50).